A 95-amino-acid polypeptide reads, in one-letter code: Ragulator complex protein LAMTOR4 homolog (95 aa).

The protein belongs to the LAMTOR4 family. Part of the Ragulator complex.

Its subcellular location is the lysosome. In terms of biological role, regulator of the TOR pathway, a signaling cascade that promotes cell growth in response to growth factors, energy levels, and amino acids. As part of the Ragulator complex, may activate the TOR signaling cascade in response to amino acids. This Nematostella vectensis (Starlet sea anemone) protein is Ragulator complex protein LAMTOR4 homolog.